The primary structure comprises 413 residues: Glutamyl-tRNA reductase (413 aa).

Substrate is bound by residues 57-60, Ser-113, 118-120, and Gln-124; these read TCNR and DFE. The active-site Nucleophile is the Cys-58. NADP(+) is bound at residue 193–198; that stretch reads GTGKIG.

It belongs to the glutamyl-tRNA reductase family. Homodimer.

It carries out the reaction (S)-4-amino-5-oxopentanoate + tRNA(Glu) + NADP(+) = L-glutamyl-tRNA(Glu) + NADPH + H(+). The protein operates within porphyrin-containing compound metabolism; protoporphyrin-IX biosynthesis; 5-aminolevulinate from L-glutamyl-tRNA(Glu): step 1/2. Its function is as follows. Catalyzes the NADPH-dependent reduction of glutamyl-tRNA(Glu) to glutamate 1-semialdehyde (GSA). The polypeptide is Glutamyl-tRNA reductase (Flavobacterium psychrophilum (strain ATCC 49511 / DSM 21280 / CIP 103535 / JIP02/86)).